The following is a 311-amino-acid chain: Glutaminase (311 aa).

7 residues coordinate substrate: serine 69, asparagine 120, glutamate 164, asparagine 171, tyrosine 195, tyrosine 247, and valine 265.

It belongs to the glutaminase family. Homotetramer.

The catalysed reaction is L-glutamine + H2O = L-glutamate + NH4(+). The polypeptide is Glutaminase (Colwellia psychrerythraea (strain 34H / ATCC BAA-681) (Vibrio psychroerythus)).